Here is a 263-residue protein sequence, read N- to C-terminus: Benzil reductase ((S)-benzoin forming) IRC24 (263 aa).

NADP(+)-binding residues include Ile7 and Asn86. Ser143 (proton donor) is an active-site residue. The NADP(+) site is built by Tyr157, Lys161, Val190, and Thr192. Catalysis depends on Tyr157, which acts as the Proton acceptor. Lys161 serves as the catalytic Lowers pKa of active site Tyr.

The protein belongs to the short-chain dehydrogenases/reductases (SDR) family.

The enzyme catalyses (S)-benzoin + NADP(+) = benzil + NADPH + H(+). It catalyses the reaction 2-hydroxy-1-phenyl-1-propanone + NADP(+) = 1-phenyl-1,2-propanedione + NADPH + H(+). Its function is as follows. Reduces benzil stereospecifically to (S)-benzoin. Also reduces 1-phenyl-1,2-propanedione to 2-hydroxy-1-phenyl-1-propanone. Is probably involved in a pathway contributing to genomic integrity. The protein is Benzil reductase ((S)-benzoin forming) IRC24 (IRC24) of Saccharomyces cerevisiae (strain ATCC 204508 / S288c) (Baker's yeast).